A 3948-amino-acid chain; its full sequence is Equisetin synthetase eqxS (3948 aa).

The 435-residue stretch at 4–438 folds into the Ketosynthase family 3 (KS3) domain; it reads SEPIAVIGSA…GTNAHAIIEA (435 aa). Catalysis depends on for beta-ketoacyl synthase activity residues Cys177, His316, and His358. Positions 543 to 847 are malonyl-CoA:ACP transacylase (MAT) domain; the sequence is IFTGQGTQWP…DTIEAISEGR (305 aa). The segment at 931–1066 is N-terminal hotdog fold; that stretch reads HPLLGRRCHD…AQIKASLGAP (136 aa). The tract at residues 931 to 1233 is dehydratase (DH) domain; sequence HPLLGRRCHD…MELVPFSPAT (303 aa). The 305-residue stretch at 931 to 1235 folds into the PKS/mFAS DH domain; sequence HPLLGRRCHD…LVPFSPATPA (305 aa). His964 serves as the catalytic Proton acceptor; for dehydratase activity. The C-terminal hotdog fold stretch occupies residues 1081-1235; it reads LRPVSVDRFY…LVPFSPATPA (155 aa). The active-site Proton donor; for dehydratase activity is Asp1141. The methyltransferase (MT) domain stretch occupies residues 1376–1574; the sequence is MLQDVYEQGF…GIDTTTPPVH (199 aa). Residues 2105 to 2277 are ketoreductase (KR) domain; sequence TFLLVGLTGE…VAASSIDISS (173 aa). The region spanning 2389–2464 is the Carrier 1 domain; the sequence is AIIKESFIVR…DLVDECLDLL (76 aa). Position 2424 is an O-(pantetheine 4'-phosphoryl)serine (Ser2424). Residues 2480–2553 are disordered; the sequence is QAAKPTTVIP…NSTDILAPPR (74 aa). Composition is skewed to polar residues over residues 2487-2505 and 2513-2528; these read VIPQ…QGTS and GSDS…LTSW. The segment covering 2529–2541 has biased composition (basic and acidic residues); sequence DRQDSSPPDKSDD. The tract at residues 2564 to 2991 is condensation (C) domain; the sequence is SYGQAGFWFL…IRGSDKTVDA (428 aa). Positions 3026–3424 are adenylation (A) (KR) domain; the sequence is QVIQDNPDNI…DGLLFCDGRL (399 aa). A Carrier 2 domain is found at 3540–3617; that stretch reads EILTPSEQRL…AMAGVLEDCG (78 aa). Ser3577 carries the post-translational modification O-(pantetheine 4'-phosphoryl)serine. The segment at 3653–3870 is reductase (RED) domain; it reads LTGSSGYLGR…MPVNEVVEAI (218 aa).

In the C-terminal section; belongs to the NRP synthetase family.

It catalyses the reaction L-serine + 7 malonyl-CoA + acetyl-CoA + 2 S-adenosyl-L-methionine + ATP + 8 NADPH + 11 H(+) = (5S)-3-[(2E,6R,8E,10E,12E)-2,6-dimethyltetradeca-2,8,10,12-tetraenoyl]-5-(hydroxymethyl)pyrrolidine-2,4-dione + AMP + 2 S-adenosyl-L-homocysteine + 7 CO2 + diphosphate + 8 NADP(+) + 8 CoA + 6 H2O. The protein operates within mycotoxin biosynthesis. Hybrid PKS-NRPS synthetase; part of the gene cluster that mediates the biosynthesis of equisetin, a trans-fused decalin-containing tetramic acid with antimicrobial activity. The PKS module of eqxS together with the enoylreductase eqxC catalyze the formation of the polyketide unit which is then conjugated to L-serine by the condensation domain of the eqxS NRPS module. Activity of the Dieckmann cyclase domain (RED) results in release of the Dieckmann product intermediate. Diels-Alderase eqx3 is involved in endo-selective Diels-Alder cycloaddition to form the decalin ring, leading to the production of N-desmethylequisetin also called trichosetin. Subsequent N-methylation is carried out by eqxD to give equisetin. This is Equisetin synthetase eqxS from Fusarium heterosporum.